The chain runs to 248 residues: Gamma-glutamyl peptidase 2 (248 aa).

Residues 17–212 form the Glutamine amidotransferase type-1 domain; it reads SEFVKEMYGG…IDRVHKIKFV (196 aa). Cysteine 101 functions as the Nucleophile in the catalytic mechanism. Residues histidine 191 and glutamate 193 contribute to the active site.

Belongs to the peptidase C26 family.

The protein localises to the cytoplasm. It localises to the cytosol. It carries out the reaction an S-[(1E)-1-(hydroxyimino)-omega-(methylsulfanyl)alkyl]-L-glutathione + H2O = an S-[(1E)-1-(hydroxyimino)-omega-(methylsulfanyl)alkyl]-L-cysteinylglycine + L-glutamate. The enzyme catalyses (E)-1-(glutathione-S-yl)-2-(1H-indol-3-yl)acetohydroximate + H2O = (E)-1-(glycyl-L-cystein-S-yl)-2-(1H-indol-3-yl)acetohydroximate + L-glutamate. It catalyses the reaction 2-(glutathion-S-yl)-2-(1H-indol-3-yl)acetonitrile + H2O = 2-(glycyl-L-cystein-S-yl)-2-(1H-indol-3-yl)acetonitrile + L-glutamate. The catalysed reaction is (Z)-1-(glutathione-S-yl)-2-phenylacetohydroximate + H2O = (Z)-1-(glycyl-L-cystein-S-yl)-2-phenylacetohydroximate + L-glutamate. It functions in the pathway secondary metabolite biosynthesis. Involved in glucosinolate biosynthesis. Hydrolyzes the gamma-glutamyl peptide bond of several glutathione (GSH) conjugates to produce Cys-Gly conjugates related to glucosinolates. The gamma-Glu-Cys-Gly-GSH conjugates are the sulfur-donating molecule in glucosinolate biosynthesis. This is Gamma-glutamyl peptidase 2 from Arabidopsis thaliana (Mouse-ear cress).